The primary structure comprises 158 residues: 6,7-dimethyl-8-ribityllumazine synthase (158 aa).

5-amino-6-(D-ribitylamino)uracil-binding positions include phenylalanine 22, alanine 56 to glutamate 58, and valine 80 to isoleucine 82. Position 85 to 86 (glutamate 85 to threonine 86) interacts with (2S)-2-hydroxy-3-oxobutyl phosphate. Histidine 88 functions as the Proton donor in the catalytic mechanism. Asparagine 113 provides a ligand contact to 5-amino-6-(D-ribitylamino)uracil. Arginine 127 serves as a coordination point for (2S)-2-hydroxy-3-oxobutyl phosphate.

The protein belongs to the DMRL synthase family.

The catalysed reaction is (2S)-2-hydroxy-3-oxobutyl phosphate + 5-amino-6-(D-ribitylamino)uracil = 6,7-dimethyl-8-(1-D-ribityl)lumazine + phosphate + 2 H2O + H(+). Its pathway is cofactor biosynthesis; riboflavin biosynthesis; riboflavin from 2-hydroxy-3-oxobutyl phosphate and 5-amino-6-(D-ribitylamino)uracil: step 1/2. In terms of biological role, catalyzes the formation of 6,7-dimethyl-8-ribityllumazine by condensation of 5-amino-6-(D-ribitylamino)uracil with 3,4-dihydroxy-2-butanone 4-phosphate. This is the penultimate step in the biosynthesis of riboflavin. This is 6,7-dimethyl-8-ribityllumazine synthase from Neisseria meningitidis serogroup C (strain 053442).